Consider the following 605-residue polypeptide: Aspartate--tRNA(Asp/Asn) ligase (605 aa).

Glu183 is an L-aspartate binding site. An aspartate region spans residues 207–210; that stretch reads QLFK. Residue Arg229 participates in L-aspartate binding. ATP-binding positions include 229 to 231 and Gln238; that span reads RDE. Residue His457 participates in L-aspartate binding. Glu497 provides a ligand contact to ATP. Arg504 lines the L-aspartate pocket. 549-552 serves as a coordination point for ATP; the sequence is GLDR.

This sequence belongs to the class-II aminoacyl-tRNA synthetase family. Type 1 subfamily. As to quaternary structure, homodimer.

It is found in the cytoplasm. It carries out the reaction tRNA(Asx) + L-aspartate + ATP = L-aspartyl-tRNA(Asx) + AMP + diphosphate. Its function is as follows. Aspartyl-tRNA synthetase with relaxed tRNA specificity since it is able to aspartylate not only its cognate tRNA(Asp) but also tRNA(Asn). Reaction proceeds in two steps: L-aspartate is first activated by ATP to form Asp-AMP and then transferred to the acceptor end of tRNA(Asp/Asn). This Persephonella marina (strain DSM 14350 / EX-H1) protein is Aspartate--tRNA(Asp/Asn) ligase.